The chain runs to 413 residues: 2,3-diketo-5-methylthiopentyl-1-phosphate enolase (413 aa).

The active-site Proton acceptor is Lys98. Substrate-binding positions include Lys147, 173–176, His264, Gly337, and 359–360; these read KDDE and GG. The Mg(2+) site is built by Lys173, Asp175, and Glu176. Residue Lys173 is modified to N6-carboxylysine.

This sequence belongs to the RuBisCO large chain family. Type IV subfamily. Homodimer. Mg(2+) is required as a cofactor.

It carries out the reaction 5-methylsulfanyl-2,3-dioxopentyl phosphate = 2-hydroxy-5-methylsulfanyl-3-oxopent-1-enyl phosphate. It participates in amino-acid biosynthesis; L-methionine biosynthesis via salvage pathway; L-methionine from S-methyl-5-thio-alpha-D-ribose 1-phosphate: step 3/6. In terms of biological role, catalyzes the enolization of 2,3-diketo-5-methylthiopentyl-1-phosphate (DK-MTP-1-P) into 2-hydroxy-3-keto-5-methylthiopentenyl-1-phosphate (HK-MTPenyl-1-P). This chain is 2,3-diketo-5-methylthiopentyl-1-phosphate enolase, found in Geobacillus thermodenitrificans (strain NG80-2).